The chain runs to 94 residues: Small ribosomal subunit protein uS19c (94 aa).

Belongs to the universal ribosomal protein uS19 family.

It is found in the plastid. The protein resides in the chloroplast. Functionally, protein S19 forms a complex with S13 that binds strongly to the 16S ribosomal RNA. This Pleurastrum terricola (Filamentous green alga) protein is Small ribosomal subunit protein uS19c.